Reading from the N-terminus, the 224-residue chain is Dickkopf-related protein 4 (224 aa).

Positions Met-1–Ala-18 are cleaved as a signal peptide. The segment at Cys-41–Cys-90 is DKK-type Cys-1. The segment at Gly-109–Gly-139 is disordered. Residues Lys-126–Gly-136 are compositionally biased toward basic residues. Disulfide bonds link Cys-145/Cys-157, Cys-151/Cys-166, Cys-156/Cys-194, Cys-176/Cys-202, and Cys-196/Cys-218. A DKK-type Cys-2 region spans residues Cys-145–Cys-218.

The protein belongs to the dickkopf family. In terms of assembly, interacts with LRP5 and LRP6. Post-translationally, appears to be not glycosylated. In terms of processing, can be proteolytically processed by a furin-like protease. As to expression, expressed in cerebellum, T-cells, esophagus and lung.

It is found in the secreted. Functionally, antagonizes canonical Wnt signaling by inhibiting LRP5/6 interaction with Wnt and by forming a ternary complex with the transmembrane protein KREMEN that promotes internalization of LRP5/6. DKKs play an important role in vertebrate development, where they locally inhibit Wnt regulated processes such as antero-posterior axial patterning, limb development, somitogenesis and eye formation. In the adult, Dkks are implicated in bone formation and bone disease, cancer and Alzheimer disease. This chain is Dickkopf-related protein 4 (DKK4), found in Homo sapiens (Human).